The chain runs to 206 residues: GTP-binding protein YPTC5 (206 aa).

15–22 (GDSGVGKT) provides a ligand contact to GTP. The Effector region motif lies at 37–45 (YKATIGADF). GTP contacts are provided by residues 63-67 (DTAGQ) and 125-128 (NKID). S-geranylgeranyl cysteine attachment occurs at residues cysteine 205 and cysteine 206.

The protein belongs to the small GTPase superfamily. Rab family.

Its subcellular location is the cell membrane. Protein transport. Probably involved in vesicular traffic. The chain is GTP-binding protein YPTC5 (YPTC5) from Chlamydomonas reinhardtii (Chlamydomonas smithii).